Consider the following 446-residue polypeptide: UDP-N-acetylmuramoylalanine--D-glutamate ligase (446 aa).

115-121 provides a ligand contact to ATP; sequence GTNGKTT.

This sequence belongs to the MurCDEF family.

Its subcellular location is the cytoplasm. The catalysed reaction is UDP-N-acetyl-alpha-D-muramoyl-L-alanine + D-glutamate + ATP = UDP-N-acetyl-alpha-D-muramoyl-L-alanyl-D-glutamate + ADP + phosphate + H(+). The protein operates within cell wall biogenesis; peptidoglycan biosynthesis. Cell wall formation. Catalyzes the addition of glutamate to the nucleotide precursor UDP-N-acetylmuramoyl-L-alanine (UMA). The chain is UDP-N-acetylmuramoylalanine--D-glutamate ligase from Trichlorobacter lovleyi (strain ATCC BAA-1151 / DSM 17278 / SZ) (Geobacter lovleyi).